The sequence spans 62 residues: MATKVKFKYKGEEKEVDISKIKKVWRVGKMISFTYDDNGKTGRGAVSEKDAPKELLDKLEKK.

Belongs to the 7 kDa DNA-binding/endoribonuclease P2 family. In terms of assembly, monomer.

It localises to the cytoplasm. Its function is as follows. Can constrain negative DNA supercoils. May be involved in maintaining the integrity of the genome at high temperature. The sequence is that of DNA-binding protein 7b from Acidianus hospitalis (strain W1).